The sequence spans 126 residues: Defensin-like protein 183 (126 aa).

The first 26 residues, 1–26 (MEKALSLVVFIIFSIMLASVENKVNA), serve as a signal peptide directing secretion. 8 disulfides stabilise this stretch: C29/C68, C36/C55, C39/C62, C43/C64, C80/C126, C91/C111, C96/C120, and C100/C122.

This sequence belongs to the DEFL family.

The protein resides in the secreted. The chain is Defensin-like protein 183 (LCR19) from Arabidopsis thaliana (Mouse-ear cress).